Consider the following 193-residue polypeptide: Oleosin S1-2 (193 aa).

A2 carries the N-acetylalanine modification. The interval 2–39 (ADVRTHAHQVQVHPLRQHEGGIKVVYPQSGPSSTQVLA) is polar. Transmembrane regions (helical) follow at residues 37 to 57 (VLAV…AGLT), 66 to 86 (ILAF…AFVI), and 87 to 107 (GLAM…LSSM). The segment at 40–113 (VVAGVPVGGT…LSSMSWVLNH (74 aa)) is hydrophobic. The segment at 139-193 (AGQRTKDAGQTIEDKAHDVRESKTYDVRDRDTKGHTASGGDRDTKTTREVRVATT) is disordered. Residues 142–193 (RTKDAGQTIEDKAHDVRESKTYDVRDRDTKGHTASGGDRDTKTTREVRVATT) are compositionally biased toward basic and acidic residues.

Belongs to the oleosin family.

Its subcellular location is the lipid droplet. The protein localises to the membrane. Its function is as follows. May have a structural role to stabilize the lipid body during desiccation of the seed by preventing coalescence of the oil. Probably interacts with both lipid and phospholipid moieties of lipid bodies. May also provide recognition signals for specific lipase anchorage in lipolysis during seedling growth. This is Oleosin S1-2 (S1) from Brassica napus (Rape).